A 159-amino-acid polypeptide reads, in one-letter code: 6,7-dimethyl-8-ribityllumazine synthase (159 aa).

Residues Y23, 58–60 (AYE), and 82–84 (TII) contribute to the 5-amino-6-(D-ribitylamino)uracil site. Catalysis depends on H90, which acts as the Proton donor. I115 provides a ligand contact to 5-amino-6-(D-ribitylamino)uracil. R129 provides a ligand contact to (2S)-2-hydroxy-3-oxobutyl phosphate.

Belongs to the DMRL synthase family. Forms an icosahedral capsid composed of 60 subunits, arranged as a dodecamer of pentamers.

The catalysed reaction is (2S)-2-hydroxy-3-oxobutyl phosphate + 5-amino-6-(D-ribitylamino)uracil = 6,7-dimethyl-8-(1-D-ribityl)lumazine + phosphate + 2 H2O + H(+). The protein operates within cofactor biosynthesis; riboflavin biosynthesis; riboflavin from 2-hydroxy-3-oxobutyl phosphate and 5-amino-6-(D-ribitylamino)uracil: step 1/2. Catalyzes the formation of 6,7-dimethyl-8-ribityllumazine by condensation of 5-amino-6-(D-ribitylamino)uracil with 3,4-dihydroxy-2-butanone 4-phosphate. This is the penultimate step in the biosynthesis of riboflavin. The sequence is that of 6,7-dimethyl-8-ribityllumazine synthase from Buchnera aphidicola subsp. Baizongia pistaciae (strain Bp).